Reading from the N-terminus, the 372-residue chain is N-methyl-L-tryptophan oxidase (372 aa).

4 to 34 contributes to the FAD binding site; sequence DLIIIGSGSVGAAAGYYATRAGLKVLMTDAH. C307 carries the post-translational modification S-8alpha-FAD cysteine.

It belongs to the MSOX/MTOX family. MTOX subfamily. Monomer. It depends on FAD as a cofactor.

The enzyme catalyses N(alpha)-methyl-L-tryptophan + O2 + H2O = L-tryptophan + formaldehyde + H2O2. In terms of biological role, catalyzes the oxidative demethylation of N-methyl-L-tryptophan. This Salmonella agona (strain SL483) protein is N-methyl-L-tryptophan oxidase.